We begin with the raw amino-acid sequence, 135 residues long: Large ribosomal subunit protein uL16c (135 aa).

Belongs to the universal ribosomal protein uL16 family. Part of the 50S ribosomal subunit.

Its subcellular location is the plastid. It localises to the chloroplast. The polypeptide is Large ribosomal subunit protein uL16c (Daucus carota (Wild carrot)).